We begin with the raw amino-acid sequence, 71 residues long: Brevinin-1CG4 (71 aa).

Positions 1–22 (MFTLKKSLLLLFFLGTINLSLC) are cleaved as a signal peptide. Residues 23-45 (EQERNADEEERRDDSDKRDVEVE) constitute a propeptide, removed in mature form. C65 and C71 are joined by a disulfide.

Belongs to the frog skin active peptide (FSAP) family. Brevinin subfamily. As to expression, expressed by the skin glands.

It localises to the secreted. In terms of biological role, antimicrobial peptide active against a variety of Gram-positive and some Gram-negative bacterial strains. Has antifungal activity against C.albicans ATCC 10231 and a slime mold isolate. Has hemolytic activity against human erythrocytes. This chain is Brevinin-1CG4, found in Amolops chunganensis (Chungan torrent frog).